The primary structure comprises 135 residues: Ribosome-binding factor A (135 aa).

The protein belongs to the RbfA family. As to quaternary structure, monomer. Binds 30S ribosomal subunits, but not 50S ribosomal subunits or 70S ribosomes.

It is found in the cytoplasm. In terms of biological role, one of several proteins that assist in the late maturation steps of the functional core of the 30S ribosomal subunit. Associates with free 30S ribosomal subunits (but not with 30S subunits that are part of 70S ribosomes or polysomes). Required for efficient processing of 16S rRNA. May interact with the 5'-terminal helix region of 16S rRNA. This chain is Ribosome-binding factor A, found in Novosphingobium aromaticivorans (strain ATCC 700278 / DSM 12444 / CCUG 56034 / CIP 105152 / NBRC 16084 / F199).